A 473-amino-acid chain; its full sequence is Photosystem II CP43 reaction center protein (473 aa).

The propeptide occupies 1 to 14 (MKTLYSLRRFYPVE). Thr-15 bears the N-acetylthreonine mark. A Phosphothreonine modification is found at Thr-15. 5 helical membrane-spanning segments follow: residues 69 to 93 (LFEVAHFVPEKPMYEQGLILLPHLA), 134 to 155 (LLGPETLEESFPFFGYVWKDRN), 178 to 200 (KALYFGGVYDTWAPGGGDVRKIT), 255 to 275 (KPFAWARRALVWSGEAYLSYS), and 291 to 312 (WFNNTAYPSEFYGPTGPEASQA). Glu-367 contacts [CaMn4O5] cluster. The helical transmembrane segment at 447–471 (RARAAAAGFEKGIDRDFEPVLSMTP) threads the bilayer.

This sequence belongs to the PsbB/PsbC family. PsbC subfamily. PSII is composed of 1 copy each of membrane proteins PsbA, PsbB, PsbC, PsbD, PsbE, PsbF, PsbH, PsbI, PsbJ, PsbK, PsbL, PsbM, PsbT, PsbX, PsbY, PsbZ, Psb30/Ycf12, at least 3 peripheral proteins of the oxygen-evolving complex and a large number of cofactors. It forms dimeric complexes. The cofactor is Binds multiple chlorophylls and provides some of the ligands for the Ca-4Mn-5O cluster of the oxygen-evolving complex. It may also provide a ligand for a Cl- that is required for oxygen evolution. PSII binds additional chlorophylls, carotenoids and specific lipids..

The protein localises to the plastid. It is found in the chloroplast thylakoid membrane. One of the components of the core complex of photosystem II (PSII). It binds chlorophyll and helps catalyze the primary light-induced photochemical processes of PSII. PSII is a light-driven water:plastoquinone oxidoreductase, using light energy to abstract electrons from H(2)O, generating O(2) and a proton gradient subsequently used for ATP formation. In Buxus microphylla (Littleleaf boxwood), this protein is Photosystem II CP43 reaction center protein.